Consider the following 84-residue polypeptide: Cysteine-rich protamine (84 aa).

Cystine bridges form between cysteine 16–cysteine 24 and cysteine 64–cysteine 80.

As to quaternary structure, cross-linked by interchain disulfide bonds around the DNA-helix. In terms of tissue distribution, testis.

Its subcellular location is the nucleus. It localises to the chromosome. Its function is as follows. Protamines substitute for histones in the chromatin of sperm during the haploid phase of spermatogenesis. They compact sperm DNA into a highly condensed, stable and inactive complex. This protamine condenses spermiogenic chromatin in a pattern which comprises fibers with a progressively larger diameter and lamellae that finally undergo definitive coalescence. This Eledone cirrhosa (Curled octopus) protein is Cysteine-rich protamine.